The following is a 332-amino-acid chain: MLEGVEHLLLLLLLTDVNSKELQSGNQTSVSHFILVGLHHPPQLGAPLFLAFLVIYLLTVSGNGLIILTVLVDIRLHRPMCLFLCHLSFLDMTISCAIVPKMLAGFLLGSRIISFGGCVIQLFSFHFLGCTECFLYTLMAYDRFLAICKPLHYATIMTHRVCNSLALGTWLGGTIHSLFQTSFVFRLPFCGPNRVDYIFCDIPAMLRLACADTAINELVTFADIGFLALTCFMLILTSYGYIVAAILRIPSADGRRNAFSTCAAHLTVVIVYYVPCTFIYLRPCSQEPLDGVVAVFYTVITPLLNSIIYTLCNKEMKAALQRLGGHKEVQPH.

The Extracellular segment spans residues 1-46; sequence MLEGVEHLLLLLLLTDVNSKELQSGNQTSVSHFILVGLHHPPQLGA. N-linked (GlcNAc...) asparagine glycosylation is present at asparagine 26. A helical membrane pass occupies residues 47–67; the sequence is PLFLAFLVIYLLTVSGNGLII. Over 68–75 the chain is Cytoplasmic; that stretch reads LTVLVDIR. The helical transmembrane segment at 76–96 threads the bilayer; sequence LHRPMCLFLCHLSFLDMTISC. The Extracellular segment spans residues 97–120; sequence AIVPKMLAGFLLGSRIISFGGCVI. Cysteines 118 and 210 form a disulfide. The chain crosses the membrane as a helical span at residues 121–141; the sequence is QLFSFHFLGCTECFLYTLMAY. Over 142-160 the chain is Cytoplasmic; sequence DRFLAICKPLHYATIMTHR. Residues 161-181 traverse the membrane as a helical segment; sequence VCNSLALGTWLGGTIHSLFQT. Residues 182-218 are Extracellular-facing; it reads SFVFRLPFCGPNRVDYIFCDIPAMLRLACADTAINEL. Residues 219-238 traverse the membrane as a helical segment; it reads VTFADIGFLALTCFMLILTS. Topologically, residues 239 to 258 are cytoplasmic; it reads YGYIVAAILRIPSADGRRNA. The helical transmembrane segment at 259 to 279 threads the bilayer; the sequence is FSTCAAHLTVVIVYYVPCTFI. Residues 280–290 lie on the Extracellular side of the membrane; that stretch reads YLRPCSQEPLD. Residues 291-311 form a helical membrane-spanning segment; that stretch reads GVVAVFYTVITPLLNSIIYTL. Residues 312–332 lie on the Cytoplasmic side of the membrane; the sequence is CNKEMKAALQRLGGHKEVQPH.

Belongs to the G-protein coupled receptor 1 family.

It is found in the cell membrane. Its function is as follows. Odorant receptor. In Homo sapiens (Human), this protein is Olfactory receptor 10G6 (OR10G6).